We begin with the raw amino-acid sequence, 86 residues long: Toxin TdNa7 (86 aa).

Positions 1–20 (MTRFVLFLSCFFLIGMVVEC) are cleaved as a signal peptide. In terms of domain architecture, LCN-type CS-alpha/beta spans 21–83 (KDGYLMGPDG…TWERATNTCG (63 aa)). Disulfide bonds link C31/C82, C35/C57, C43/C63, and C47/C65. A Lysine amide modification is found at K84.

The protein belongs to the long (4 C-C) scorpion toxin superfamily. Sodium channel inhibitor family. Beta subfamily. In terms of tissue distribution, expressed by the venom gland.

The protein resides in the secreted. Beta toxins bind voltage-independently at site-4 of sodium channels (Nav) and shift the voltage of activation toward more negative potentials thereby affecting sodium channel activation and promoting spontaneous and repetitive firing. The chain is Toxin TdNa7 from Tityus discrepans (Venezuelan scorpion).